The following is a 586-amino-acid chain: Probable riboflavin import ATP-binding protein RfuB (586 aa).

ABC transporter domains are found at residues 46 to 299 (RAVD…NECI) and 343 to 586 (LRVE…DSHT). ATP is bound at residue 89–96 (GKNGAGKS).

The protein belongs to the ABC transporter superfamily. As to quaternary structure, the complex is probably composed of two ATP-binding proteins (RfuB), two transmembrane proteins (RfuC and RfuD) and a solute-binding protein (RfuA).

It localises to the cell inner membrane. Its function is as follows. Probably part of the ABC transporter complex RfuABCD involved in riboflavin import. Probably responsible for energy coupling to the transport system. This is Probable riboflavin import ATP-binding protein RfuB from Treponema pallidum (strain Nichols).